We begin with the raw amino-acid sequence, 293 residues long: Small ribosomal subunit biogenesis GTPase RsgA (293 aa).

One can recognise a CP-type G domain in the interval 63 to 223 (QNELVRPPVA…VADTPGFSAL (161 aa)). GTP contacts are provided by residues 112 to 115 (SKID) and 166 to 174 (GQSGVGKSS). Cys247, Cys252, His254, and Cys260 together coordinate Zn(2+).

Belongs to the TRAFAC class YlqF/YawG GTPase family. RsgA subfamily. Monomer. Associates with 30S ribosomal subunit, binds 16S rRNA. Zn(2+) is required as a cofactor.

The protein localises to the cytoplasm. One of several proteins that assist in the late maturation steps of the functional core of the 30S ribosomal subunit. Helps release RbfA from mature subunits. May play a role in the assembly of ribosomal proteins into the subunit. Circularly permuted GTPase that catalyzes slow GTP hydrolysis, GTPase activity is stimulated by the 30S ribosomal subunit. In Geobacillus thermodenitrificans (strain NG80-2), this protein is Small ribosomal subunit biogenesis GTPase RsgA.